The following is a 286-amino-acid chain: uncharacterized protein (286 aa).

Positions 1-58 constitute an HTH lysR-type domain; it reads MLLEGIETLLVLSKEKTMSRTGSQLYISQSAVSKRIANLEKKLGKKLIVPAGRHIKLT. The H-T-H motif DNA-binding region spans 18 to 37; the sequence is MSRTGSQLYISQSAVSKRIA.

This sequence belongs to the LysR transcriptional regulatory family.

This is an uncharacterized protein from Vibrio cholerae serotype O1 (strain ATCC 39315 / El Tor Inaba N16961).